A 308-amino-acid polypeptide reads, in one-letter code: Testis-specific Y-encoded protein 8 (308 aa).

It belongs to the nucleosome assembly protein (NAP) family.

The protein resides in the cytoplasm. The protein localises to the nucleus. Its function is as follows. May be involved in sperm differentiation and proliferation. This is Testis-specific Y-encoded protein 8 (TSPY8) from Homo sapiens (Human).